A 341-amino-acid polypeptide reads, in one-letter code: MEPAFGEVNQLGGVFVNGRPLPNAIRLRIVELAQLGIRPCDISRQLRVSHGCVSKILARYNETGSILPGAIGGSKPRVTTPTVVKHIRTYKQRDPGIFAWEIRDRLLADGVCDKYNVPSVSSISRILRNKIGNLAQQAHYDSYKQHQPAPQPALPYNHIYSYPSPITAAAAKVPTPPGVPAIPGSVAMPRTWPSSHSVTDILGIRSITDQVSDSSPYHSPKVEEWSSLGRNNFPAAAPHAVNGLEKGALEQETKYSQAPNGLPAVGSFVSASSMAPYPTPAQVSPYMTYSAAPSGYVAGHGWQHAGSTPLSPHNCDIPASLAFKGMQAAREGSHSVTASAL.

The paired DNA-binding region spans 4 to 130; the sequence is AFGEVNQLGG…SSISRILRNK (127 aa). The interval 7-63 is PAI subdomain; it reads EVNQLGGVFVNGRPLPNAIRLRIVELAQLGIRPCDISRQLRVSHGCVSKILARYNET. Residues 82 to 130 are RED subdomain; that stretch reads TVVKHIRTYKQRDPGIFAWEIRDRLLADGVCDKYNVPSVSSISRILRNK. The interaction with KDM5B stretch occupies residues 168–189; the sequence is AAAAKVPTPPGVPAIPGSVAMP.

As to quaternary structure, interacts with KDM5B.

The protein resides in the nucleus. Functionally, transcription factor required for normal development of thymus, parathyroid glands, ultimobranchial bodies, teeth, skeletal elements of skull and larynx as well as distal limbs. In Saguinus oedipus (Cotton-top tamarin), this protein is Paired box protein Pax-9 (PAX9).